The sequence spans 3016 residues: Genome polyprotein (3016 aa).

Residue Ser2 is modified to N-acetylserine; by host. The tract at residues 2–23 is interaction with STAT1; sequence STLPKPQRKTKRNTNRRPMDVK. Positions 2-58 are interaction with EIF2AK2/PKR; that stretch reads STLPKPQRKTKRNTNRRPMDVKFPGGGQIVGGVYLLPRRGPRLGVRATRKTSERSQP. The interaction with DDX3X stretch occupies residues 2-59; sequence STLPKPQRKTKRNTNRRPMDVKFPGGGQIVGGVYLLPRRGPRLGVRATRKTSERSQPR. Residues 2–75 are disordered; that stretch reads STLPKPQRKT…PKARQSQGRH (74 aa). At 2 to 168 the chain is on the cytoplasmic side; that stretch reads STLPKPQRKT…EDGINYATGN (167 aa). 2 consecutive short sequence motifs (nuclear localization signal) follow at residues 5-13 and 38-43; these read PKPQRKTKR and PRRGPR. Residues 7-16 are compositionally biased toward basic residues; that stretch reads PQRKTKRNTN. The span at 32–47 shows a compositional bias: low complexity; that stretch reads GGVYLLPRRGPRLGVR. Phosphoserine; by host is present on Ser53. 2 short sequence motifs (nuclear localization signal) span residues 58-64 and 66-71; these read PRGRRQP and PKARQS. Phosphoserine; by host is present on residues Ser99 and Ser116. The tract at residues 112-152 is important for endoplasmic reticulum and mitochondrial localization; it reads PRRRSRNLGKVIDTLTCGFADLMGYIPVVGAPLGGVAAALA. The tract at residues 122-173 is interaction with APOA2; it reads VIDTLTCGFADLMGYIPVVGAPLGGVAAALAHGVRAIEDGINYATGNLPGCS. The tract at residues 164-167 is important for lipid droplets localization; it reads YATG. Residues 169–189 form a helical membrane-spanning segment; it reads LPGCSFSIFLLALLSCLTTPA. The propeptide at 178–191 is ER anchor for the core protein, removed in mature form by host signal peptidase; that stretch reads LLALLSCLTTPASA. Residues 190-358 are Lumenal-facing; the sequence is SAVHYRNISG…LEGHWGVIGA (169 aa). 4 N-linked (GlcNAc...) asparagine; by host glycosylation sites follow: Asn196, Asn209, Asn234, and Asn250. The interval 265 to 296 is important for fusion; the sequence is LVGSAAACSALYIGDLCGGVFLVGQLFTFRPR. The N-linked (GlcNAc...) asparagine; by host glycan is linked to Asn305. Residues 359 to 379 form a helical membrane-spanning segment; the sequence is LLYYSMVANWAKVFAVLLLFA. Residues 380–727 lie on the Lumenal side of the membrane; it reads GVDATTHIGS…WEYIVLAFLV (348 aa). The HVR1 stretch occupies residues 385 to 411; it reads THIGSSASATTNRLTSFFSPGSKQNVQ. N-linked (GlcNAc...) (high mannose) asparagine; by host glycans are attached at residues Asn416, Asn422, and Asn429. 4 disulfides stabilise this stretch: Cys428-Cys552, Cys451-Cys458, Cys486-Cys494, and Cys503-Cys508. Asn447 is a glycosylation site (N-linked (GlcNAc...) asparagine; by host). An HVR2 region spans residues 474-478; sequence ANISG. Asn475 carries N-linked (GlcNAc...) asparagine; by host glycosylation. The tract at residues 480–493 is CD81-binding 1; the sequence is SNDKPYCWHYPPRP. N-linked (GlcNAc...) asparagine; by host glycosylation occurs at Asn532. Positions 544–551 are CD81-binding 2; the sequence is PPRGSWFG. Asn556 carries an N-linked (GlcNAc...) asparagine; by host glycan. Intrachain disulfides connect Cys564–Cys569, Cys583–Cys587, Cys599–Cys622, and Cys609–Cys646. Asn625 and Asn647 each carry an N-linked (GlcNAc...) (high mannose) asparagine; by host glycan. A disulfide bridge links Cys654 with Cys679. The PKR/eIF2-alpha phosphorylation homology domain (PePHD) stretch occupies residues 662 to 673; sequence VEMSPLLFSTTQ. Residues 728–748 traverse the membrane as a helical segment; the sequence is LAVARVCACLWLMFLVGQAEA. At 749–759 the chain is on the lumenal side; sequence ALENLIVLNAT. A helical membrane pass occupies residues 760–780; the sequence is SAAGSQGWVWGVVFICAAWYI. Over 781-784 the chain is Cytoplasmic; the sequence is RGRA. The chain crosses the membrane as a helical span at residues 785-805; sequence APITTYAILQLWPLLLLVLAL. The Lumenal segment spans residues 806-815; it reads PRRAYAYNGE. The chain crosses the membrane as a helical span at residues 816–836; that stretch reads EAASLGMLAIVIITIFTLTPA. Residues 837–883 are Cytoplasmic-facing; that stretch reads YKTLLISTLWWIQYYIARAEAMLYVWVPSLQVRGGRDAVILLTCLLH. A helical membrane pass occupies residues 884-904; the sequence is PQLGFEVTKAILALLGPLYIL. At 905-930 the chain is on the lumenal side; the sequence is QYSLLKTPYFVRAHILLRVCMFLRGV. The 124-residue stretch at 905–1028 folds into the Peptidase C18 domain; that stretch reads QYSLLKTPYF…DIRDGGWRLL (124 aa). The segment at 906 to 1208 is protease NS2-3; that stretch reads YSLLKTPYFV…PVENMQSTAR (303 aa). Cys924 is lipidated: S-palmitoyl cysteine; by host. A helical transmembrane segment spans residues 931-951; that stretch reads AGGKYVQAALLRLGAWTGTYI. Residues 931–951 form an interaction with host SCPS1 region; it reads AGGKYVQAALLRLGAWTGTYI. Residues 952–1659 lie on the Cytoplasmic side of the membrane; it reads YDHLTPLSDW…CMSADLEVIT (708 aa). Catalysis depends on for protease NS2 activity; shared with dimeric partner residues His954, Glu974, and Cys995. Positions 1029–1210 constitute a Peptidase S29 domain; that stretch reads APITAYAQQT…ENMQSTARSP (182 aa). Active-site charge relay system; for serine protease NS3 activity residues include His1085 and Asp1109. The Zn(2+) site is built by Cys1125 and Cys1127. Ser1167 (charge relay system; for serine protease NS3 activity) is an active-site residue. Residues Cys1173 and His1177 each coordinate Zn(2+). Residues 1219 to 1371 enclose the Helicase ATP-binding domain; it reads PAVPQTYQVG…PNITEVALSS (153 aa). An ATP-binding site is contributed by 1232 to 1239; sequence APTGSGKS. The Mg(2+) site is built by Ser1239 and Glu1319. Residues 1318–1321 carry the DECH box motif; it reads DECH. The RNA-binding stretch occupies residues 1488–1500; that stretch reads QRRGRTGRGKHGV. A helical membrane pass occupies residues 1660–1680; the sequence is STWVLVGGVLAALAAYCLSVG. The tract at residues 1681-1692 is NS3-binding; that stretch reads CVVVCGRISTTG. Residues 1681 to 1807 are Cytoplasmic-facing; sequence CVVVCGRIST…SLTSPLSTST (127 aa). The chain crosses the membrane as a helical span at residues 1808 to 1828; it reads TLLLNILGGWVASQLANPTAS. Over 1829–1830 the chain is Lumenal; the sequence is TA. Residues 1831–1851 traverse the membrane as a helical segment; it reads FVVSGLAGATVGSIGLGRVLV. Position 1852 (Asp1852) is a topological domain, cytoplasmic. A helical membrane pass occupies residues 1853–1873; it reads IIAGYGAGVSGALVAFKIMSG. The Lumenal portion of the chain corresponds to 1874–1883; sequence ETPSAEDMVN. Residues 1884–1904 form a helical membrane-spanning segment; sequence LLPALLSPGALVVGVVCAAIL. Residues 1905-1974 lie on the Cytoplasmic side of the membrane; the sequence is RRHAGPAEGA…WINSDWSTPC (70 aa). Residue Cys1974 is the site of S-palmitoyl cysteine; by host attachment. Residues 1975–2004 lie within the membrane without spanning it; the sequence is SGSWLRDIWDWVCTVLSDFKVWLKSKLVPA. At 2005–2995 the chain is on the cytoplasmic side; it reads LPGVPFLSCQ…YHSVSRARPR (991 aa). 4 residues coordinate Zn(2+): Cys2013, Cys2031, Cys2033, and Cys2054. Residues 2122 to 2210 are FKBP8-binding; sequence EFFTEVDGVR…ASSLASQLSA (89 aa). Residues 2122–2335 are transcriptional activation; the sequence is EFFTEVDGVR…PVPPPRRKSV (214 aa). The segment at 2137–2141 is interaction with non-structural protein 4A; it reads PACKP. Residues 2191–2443 are interaction with host SKP2; sequence RLARGSPPSC…ALVTPCAAEE (253 aa). Phosphoserine; by host is present on residues Ser2196, Ser2199, Ser2203, Ser2206, Ser2209, and Ser2212. Positions 2212 to 2251 are ISDR; it reads SLKATCTTHCAHPDADLIEANLLWRQEVGGNITRVESENK. The segment at 2212–2277 is interaction with EIF2AK2/PKR; it reads SLKATCTTHC…REPSVPAECH (66 aa). The segment at 2251–2309 is NS4B-binding; sequence KVIVLDSFDPLVPEYDDREPSVPAECHRPNRPKFPPALPIWARPDYNPPLLETWKKPDY. A V3 region spans residues 2302–2379; the sequence is ETWKKPDYAP…PTTSKSSDQA (78 aa). Positions 2325 to 2328 match the SH3-binding motif; it reads PPVP. The short motif at 2330 to 2338 is the Nuclear localization signal element; sequence PRRKSVVHL. Residue Lys2353 forms a Glycyl lysine isopeptide (Lys-Gly) (interchain with G-Cter in ubiquitin) linkage. Residues 2353–2414 are disordered; the sequence is KSFPTQPAST…PDLSSGSWST (62 aa). Residues 2355–2376 show a composition bias toward polar residues; it reads FPTQPASTPDSDSGHPTTSKSS. Ser2454 bears the Phosphoserine; by host mark. The RdRp catalytic domain occupies 2639 to 2757; sequence PMGFSYDTRC…IAESAGVQED (119 aa). The Mg(2+) site is built by Asp2645, Asp2743, and Asp2744. A helical membrane pass occupies residues 2996-3016; it reads IFLLCLLLLSVGVGIFLLPAR.

The protein belongs to the hepacivirus polyprotein family. Homooligomer. Interacts with E1 (via C-terminus). Interacts with the non-structural protein 5A. Interacts (via N-terminus) with host STAT1 (via SH2 domain); this interaction results in decreased STAT1 phosphorylation and ubiquitin-mediated proteasome-dependent STAT1 degradation, leading to decreased IFN-stimulated gene transcription. Interacts with host STAT3; this interaction constitutively activates STAT3. Interacts with host LTBR receptor. Interacts with host TNFRSF1A receptor and possibly induces apoptosis. Interacts with host HNRPK. Interacts with host YWHAE. Interacts with host UBE3A/E6AP. Interacts with host DDX3X. Interacts with host APOA2. Interacts with host RXRA protein. Interacts with host SP110 isoform 3/Sp110b; this interaction sequesters the transcriptional corepressor SP110 away from the nucleus. Interacts with host CREB3 nuclear transcription protein; this interaction triggers cell transformation. Interacts with host ACY3. Interacts with host C1QR1. Interacts with host RBM24; this interaction, which enhances the interaction of the mature core protein with 5'-UTR, may inhibit viral translation and favor replication. Interacts with host EIF2AK2/PKR; this interaction induces the autophosphorylation of EIF2AK2. Part of the viral assembly initiation complex composed of NS2, E1, E2, NS3, NS4A, NS5A and the mature core protein. In terms of assembly, forms a heterodimer with envelope glycoprotein E2. Interacts with mature core protein. Interacts with protease NS2. The heterodimer E1/E2 interacts with host CLDN1; this interaction plays a role in viral entry into host cell. Interacts with host SPSB2 (via C-terminus). Part of the viral assembly initiation complex composed of NS2, E1, E2, NS3, NS4A, NS5A and the mature core protein. Interacts with host NEURL3; this interaction prevents E1 binding to glycoprotein E2. As to quaternary structure, forms a heterodimer with envelope glycoprotein E1. Interacts with host CD81 and SCARB1 receptors; these interactions play a role in viral entry into host cell. Interacts with host EIF2AK2/PKR; this interaction inhibits EIF2AK2 and probably allows the virus to evade the innate immune response. Interacts with host CD209/DC-SIGN and CLEC4M/DC-SIGNR. Interact with host SPCS1; this interaction is essential for viral particle assembly. Interacts with protease NS2. The heterodimer E1/E2 interacts with host CLDN1; this interaction plays a role in viral entry into host cell. Part of the viral assembly initiation complex composed of NS2, E1, E2, NS3, NS4A, NS5A and the mature core protein. Interacts with host SLC3A2/4F2hc; the interaction may facilitate viral entry into host cell. Interacts with human PLSCR1. Homohexamer. Homoheptamer. Interacts with protease NS2. In terms of assembly, homodimer. Interacts with host SPCS1; this interaction is essential for viral particle assembly. Interacts with envelope glycoprotein E1. Interacts with envelope glycoprotein E2. Interacts with viroporin p7. Interacts with serine protease/helicase NS3. Part of the replication complex composed of NS2, NS3, NS4A, NS4B, NS5A and the RNA-directed RNA polymerase embedded in an ER-derived membranous web. Part of the viral assembly initiation complex composed of NS2, E1, E2, NS3, NS4A, NS5A and the mature core protein. As to quaternary structure, interacts with protease NS2. Interacts with non-structural protein 4A; this interaction stabilizes the folding of NS3 serine protease. NS3-NS4A interaction is essential for NS3 activation and allows membrane anchorage of the latter. NS3/NS4A complex also prevents phosphorylation of host IRF3, thus preventing the establishment of dsRNA induced antiviral state. Interacts with host MAVS; this interaction leads to the cleavage and inhibition of host MAVS. Interacts with host TICAM1; this interaction leads to the cleavage and inhibition of host TICAM1. Interacts with host TANK-binding kinase/TBK1; this interaction results in the inhibition of the association between TBK1 and IRF3, which leads to the inhibition of IRF3 activation. Interacts with host RBM24. Part of the replication complex composed of NS2, NS3, NS4A, NS4B, NS5A and the RNA-directed RNA polymerase embedded in an ER-derived membranous web. Part of the viral assembly initiation complex composed of NS2, E1, E2, NS3, NS4A, NS5A and the mature core protein. Interacts with NS3 serine protease; this interaction stabilizes the folding of NS3 serine protease. NS3-NS4A interaction is essential for NS3 activation and allows membrane anchorage of the latter. Interacts with non-structural protein 5A (via N-terminus). Part of the replication complex composed of NS2, NS3, NS4A, NS4B, NS5A and the RNA-directed RNA polymerase embedded in an ER-derived membranous web. Part of the viral assembly initiation complex composed of NS2, E1, E2, NS3, NS4A, NS5A and the mature core protein. In terms of assembly, homomultimer. Interacts with non-structural protein NS5A. Interacts with host PLA2G4C; this interaction likely initiates the recruitment of replication complexes to lipid droplets. Interacts with host STING; this interaction disrupts the interaction between STING and TBK1 thereby suppressing the interferon signaling. Part of the replication complex composed of NS2, NS3, NS4A, NS4B, NS5A and the RNA-directed RNA polymerase embedded in an ER-derived membranous web. As to quaternary structure, monomer. Homodimer; dimerization is required for RNA-binding. Interacts with the mature core protein. Interacts (via N-terminus) with non-structural protein 4A. Interacts with non-structural protein 4B. Interacts (via region D2) with RNA-directed RNA polymerase. Part of the viral assembly initiation complex composed of NS2, E1, E2, NS3, NS4A, NS5A and the mature core protein. Part of the replication complex composed of NS2, NS3, NS4A, NS4B, NS5A and the RNA-directed RNA polymerase embedded in an ER-derived membranous web. Interacts with host GRB2. Interacts with host BIN1. Interacts with host PIK3R1. Interacts with host SRCAP. Interacts with host FKBP8. Interacts (via C-terminus) with host VAPB (via MSP domain). Interacts with host EIF2AK2/PKR; this interaction leads to disruption of EIF2AK2 dimerization by NS5A and probably allows the virus to evade the innate immune response. Interacts (via N-terminus) with host PACSIN2 (via N-terminus); this interaction attenuates protein kinase C alpha-mediated phosphorylation of PACSIN2 by disrupting the interaction between PACSIN2 and PRKCA. Interacts (via N-terminus) with host SRC kinase (via SH2 domain). Interacts with most Src-family kinases. Interacts with host IFI27 and SKP2; promotes the ubiquitin-mediated proteasomal degradation of NS5A. Interacts with host GPS2. Interacts with host TNFRSF21; this interaction allows the modulation by the virus of JNK, p38 MAPK, STAT3, and Akt signaling pathways in a DR6-dependent manner. Interacts (via N-terminus) with host CIDEB (via N-terminus); this interaction seems to regulate the association of HCV particles with APOE. Interacts with host CHKA/Choline Kinase-alpha; CHKA bridges host PI4KA and NS5A and potentiates NS5A-stimulated PI4KA activity, which then facilitates the targeting of the ternary complex to the ER for viral replication. Interacts with host SPSB2 (via C-terminus); this interaction targets NS5A for ubiquitination and degradation. Interacts with host RAB18; this interaction may promote the association of NS5A and other replicase components with lipid droplets. Interacts (via region D2) with host PPIA/CYPA; the interaction stimulates RNA-binding ability of NS5A and is dependent on the peptidyl-prolyl cis-trans isomerase activity of PPIA/CYPA. Interacts with host TRIM14; this interaction induces the degradation of NS5A. Homooligomer. Interacts with non-structural protein 5A. Interacts with host VAPB. Interacts with host PRK2/PKN2. Interacts with host HNRNPA1 and SEPT6; these interactions facilitate viral replication. Part of the replication complex composed of NS2, NS3, NS4A, NS4B, NS5A and the RNA-directed RNA polymerase. The cofactor is Zn(2+). Mg(2+) is required as a cofactor. In terms of processing, specific enzymatic cleavages in vivo yield mature proteins. The structural proteins, core, E1, E2 and p7 are produced by proteolytic processing by host signal peptidases. The core protein precursor is synthesized as a 23 kDa, which is retained in the ER membrane through the hydrophobic signal peptide. Cleavage by the signal peptidase releases the 21 kDa mature core protein. The cleavage of the core protein precursor occurs between aminoacids 176 and 188 but the exact cleavage site is not known. Some degraded forms of the core protein appear as well during the course of infection. The other proteins (p7, NS2, NS3, NS4A, NS4B, NS5A and NS5B) are cleaved by the viral proteases. Autoprocessing between NS2 and NS3 is mediated by the NS2 cysteine protease catalytic domain and regulated by the NS3 N-terminal domain. Phosphorylated by host PKC and PKA. Post-translationally, ubiquitinated; mediated by UBE3A and leading to core protein subsequent proteasomal degradation. In terms of processing, highly N-glycosylated. Palmitoylation is required for NS2/3 autoprocessing and E2 recruitment to membranes. Post-translationally, palmitoylated. This modification may play a role in its polymerization or in protein-protein interactions. In terms of processing, phosphorylated on serines in a basal form termed p56. p58 is a hyperphosphorylated form of p56. p56 and p58 coexist in the cell in roughly equivalent amounts. Hyperphosphorylation is dependent on the presence of NS4A. Host CSNK1A1/CKI-alpha or RPS6KB1 kinases may be responsible for NS5A phosphorylation. Tyrosine phosphorylation is essential for the interaction with host SRC. Post-translationally, ubiquitinated. Ubiquitination, most probably at Lys-2353, mediated by host IFI27 and SKP2 leads to proteasomal degradation, restricting viral infection. Ubiquitination by host TRIM22 leads to interruption of viral replication. In terms of processing, the N-terminus is phosphorylated by host PRK2/PKN2.

The protein localises to the host endoplasmic reticulum membrane. The protein resides in the host mitochondrion membrane. Its subcellular location is the virion. It is found in the host cytoplasm. It localises to the host nucleus. The protein localises to the host lipid droplet. The protein resides in the virion membrane. Its subcellular location is the host mitochondrion. It is found in the host cell membrane. It localises to the host perinuclear region. It catalyses the reaction Hydrolysis of four peptide bonds in the viral precursor polyprotein, commonly with Asp or Glu in the P6 position, Cys or Thr in P1 and Ser or Ala in P1'.. It carries out the reaction a ribonucleoside 5'-triphosphate + H2O = a ribonucleoside 5'-diphosphate + phosphate + H(+). The enzyme catalyses ATP + H2O = ADP + phosphate + H(+). The catalysed reaction is RNA(n) + a ribonucleoside 5'-triphosphate = RNA(n+1) + diphosphate. Its activity is regulated as follows. Inhibited by the antiviral drug hexamethylene amiloride. Inhibition by amantadine appears to be genotype-dependent. Also inhibited by long-alkyl-chain iminosugar derivatives. Activity is up-regulated by PRK2/PKN2-mediated phosphorylation. In terms of biological role, packages viral RNA to form a viral nucleocapsid, and promotes virion budding. Participates in the viral particle production as a result of its interaction with the non-structural protein 5A. Binds RNA and may function as a RNA chaperone to induce the RNA structural rearrangements taking place during virus replication. Modulates viral translation initiation by interacting with viral IRES and 40S ribosomal subunit. Affects various cell signaling pathways, host immunity and lipid metabolism. Prevents the establishment of cellular antiviral state by blocking the interferon-alpha/beta (IFN-alpha/beta) and IFN-gamma signaling pathways and by blocking the formation of phosphorylated STAT1 and promoting ubiquitin-mediated proteasome-dependent degradation of STAT1. Activates STAT3 leading to cellular transformation. Regulates the activity of cellular genes, including c-myc and c-fos. May repress the promoter of p53, and sequester CREB3 and SP110 isoform 3/Sp110b in the cytoplasm. Represses cell cycle negative regulating factor CDKN1A, thereby interrupting an important check point of normal cell cycle regulation. Targets transcription factors involved in the regulation of inflammatory responses and in the immune response: suppresses TNF-induced NF-kappa-B activation, and activates AP-1. Binds to dendritic cells (DCs) via C1QR1, resulting in down-regulation of T-lymphocytes proliferation. Alters lipid metabolism by interacting with hepatocellular proteins involved in lipid accumulation and storage. Induces up-regulation of FAS promoter activity, and thereby contributes to the increased triglyceride accumulation in hepatocytes (steatosis). Forms a heterodimer with envelope glycoprotein E2, which mediates virus attachment to the host cell, virion internalization through clathrin-dependent endocytosis and fusion with host membrane. Fusion with the host cell is most likely mediated by both E1 and E2, through conformational rearrangements of the heterodimer required for fusion rather than a classical class II fusion mechanism. E1/E2 heterodimer binds host apolipoproteins such as APOB and ApoE thereby forming a lipo-viro-particle (LVP). APOE associated to the LVP allows the initial virus attachment to cell surface receptors such as the heparan sulfate proteoglycans (HSPGs), syndecan-1 (SDC1), syndecan-1 (SDC2), the low-density lipoprotein receptor (LDLR) and scavenger receptor class B type I (SCARB1). The cholesterol transfer activity of SCARB1 allows E2 exposure and binding of E2 to SCARB1 and the tetraspanin CD81. E1/E2 heterodimer binding on CD81 activates the epithelial growth factor receptor (EGFR) signaling pathway. Diffusion of the complex E1-E2-EGFR-SCARB1-CD81 to the cell lateral membrane allows further interaction with Claudin 1 (CLDN1) and occludin (OCLN) to finally trigger HCV entry. Its function is as follows. Forms a heterodimer with envelope glycoprotein E1, which mediates virus attachment to the host cell, virion internalization through clathrin-dependent endocytosis and fusion with host membrane. Fusion with the host cell is most likely mediated by both E1 and E2, through conformational rearrangements of the heterodimer required for fusion rather than a classical class II fusion mechanism. The interaction between envelope glycoprotein E2 and host apolipoprotein E/APOE allows the proper assembly, maturation and infectivity of the viral particles. This interaction is probably promoted via the up-regulation of cellular autophagy by the virus. E1/E2 heterodimer binds host apolipoproteins such as APOB and APOE thereby forming a lipo-viro-particle (LVP). APOE associated to the LVP allows the initial virus attachment to cell surface receptors such as the heparan sulfate proteoglycans (HSPGs), syndecan-1 (SDC1), syndecan-1 (SDC2), the low-density lipoprotein receptor (LDLR) and scavenger receptor class B type I (SCARB1). The cholesterol transfer activity of SCARB1 allows E2 exposure and binding of E2 to SCARB1 and the tetraspanin CD81. E1/E2 heterodimer binding on CD81 activates the epithelial growth factor receptor (EGFR) signaling pathway. Diffusion of the complex E1-E2-EGFR-SCARB1-CD81 to the cell lateral membrane allows further interaction with Claudin 1 (CLDN1) and occludin (OCLN) to finally trigger HCV entry. Inhibits host EIF2AK2/PKR activation, preventing the establishment of an antiviral state. Viral ligand for CD209/DC-SIGN and CLEC4M/DC-SIGNR, which are respectively found on dendritic cells (DCs), and on liver sinusoidal endothelial cells and macrophage-like cells of lymph node sinuses. These interactions allow the capture of circulating HCV particles by these cells and subsequent facilitated transmission to permissive cells such as hepatocytes and lymphocyte subpopulations. The interaction between E2 and host amino acid transporter complex formed by SLC3A2 and SLC7A5/LAT1 may facilitate viral entry into host cell. Functionally, ion channel protein that acts as a viroporin and plays an essential role in the assembly, envelopment and secretion of viral particles. Regulates the host cell secretory pathway, which induces the intracellular retention of viral glycoproteins and favors assembly of viral particles. Creates a pore in acidic organelles and releases Ca(2+) and H(+) in the cytoplasm of infected cells, leading to a productive viral infection. High levels of cytoplasmic Ca(2+) may trigger membrane trafficking and transport of viral ER-associated proteins to viroplasms, sites of viral genome replication. This ionic imbalance induces the assembly of the inflammasome complex, which triggers the maturation of pro-IL-1beta into IL-1beta through the action of caspase-1. Targets also host mitochondria and induces mitochondrial depolarization. In addition of its role as a viroporin, acts as a lipid raft adhesion factor. In terms of biological role, cysteine protease required for the proteolytic auto-cleavage between the non-structural proteins NS2 and NS3. The N-terminus of NS3 is required for the function of NS2 protease (active region NS2-3). Promotes the initiation of viral particle assembly by mediating the interaction between structural and non-structural proteins. Displays three enzymatic activities: serine protease with a chymotrypsin-like fold, NTPase and RNA helicase. NS3 serine protease, in association with NS4A, is responsible for the cleavages of NS3-NS4A, NS4A-NS4B, NS4B-NS5A and NS5A-NS5B. The NS3/NS4A complex prevents phosphorylation of host IRF3, thus preventing the establishment of dsRNA induced antiviral state. The NS3/NS4A complex induces host amino acid transporter component SLC3A2, thus contributing to HCV propagation. NS3 RNA helicase binds to RNA and unwinds both dsDNA and dsRNA in the 3' to 5' direction, and likely resolves RNA complicated stable secondary structures in the template strand. Binds a single ATP and catalyzes the unzipping of a single base pair of dsRNA. Inhibits host antiviral proteins TBK1 and IRF3 thereby preventing the establishment of an antiviral state. Cleaves host MAVS/CARDIF thereby preventing the establishment of an antiviral state. Cleaves host TICAM1/TRIF, thereby disrupting TLR3 signaling and preventing the establishment of an antiviral state. Its function is as follows. Peptide cofactor which forms a non-covalent complex with the N-terminal of NS3 serine protease. The NS3/NS4A complex prevents phosphorylation of host IRF3, thus preventing the establishment of dsRNA induced antiviral state. The NS3/NS4A complex induces host amino acid transporter component SLC3A2, thus contributing to HCV propagation. Functionally, induces a specific membrane alteration that serves as a scaffold for the virus replication complex. This membrane alteration gives rise to the so-called ER-derived membranous web that contains the replication complex. NS4B self-interaction contributes to its function in membranous web formation. Promotes host TRIF protein degradation in a CASP8-dependent manner thereby inhibiting host TLR3-mediated interferon signaling. Disrupts the interaction between STING and TBK1 contributing to the inhibition of interferon signaling. In terms of biological role, phosphorylated protein that is indispensable for viral replication and assembly. Both hypo- and hyperphosphorylated states are required for the viral life cycle. The hyperphosphorylated form of NS5A is an inhibitor of viral replication. Involved in RNA-binding and especially in binding to the viral genome. Zinc is essential for RNA-binding. Participates in the viral particle production as a result of its interaction with the mature viral core protein. Its interaction with host VAPB may target the viral replication complex to vesicles. Down-regulates viral IRES translation initiation. Mediates interferon resistance, presumably by interacting with and inhibiting host EIF2AK2/PKR. Prevents BIN1-induced apoptosis. Acts as a transcriptional activator of some host genes important for viral replication when localized in the nucleus. Via the interaction with host PACSIN2, modulates lipid droplet formation in order to promote virion assembly. Modulates TNFRSF21/DR6 signaling pathway for viral propagation. RNA-dependent RNA polymerase that performs primer-template recognition and RNA synthesis during viral replication. Initiates RNA transcription/replication at a flavin adenine dinucleotide (FAD), resulting in a 5'- FAD cap on viral RNAs. In this way, recognition of viral 5' RNA by host pattern recognition receptors can be bypassed, thereby evading activation of antiviral pathways. The polypeptide is Genome polyprotein (Hepatitis C virus genotype 6k (isolate VN405) (HCV)).